The sequence spans 322 residues: o-succinylbenzoate synthase (322 aa).

Catalysis depends on lysine 136, which acts as the Proton donor. The Mg(2+) site is built by aspartate 165, glutamate 194, and aspartate 219. Lysine 243 serves as the catalytic Proton acceptor.

The protein belongs to the mandelate racemase/muconate lactonizing enzyme family. MenC type 1 subfamily. In terms of assembly, monomer. A divalent metal cation is required as a cofactor.

It catalyses the reaction (1R,6R)-6-hydroxy-2-succinyl-cyclohexa-2,4-diene-1-carboxylate = 2-succinylbenzoate + H2O. It functions in the pathway quinol/quinone metabolism; 1,4-dihydroxy-2-naphthoate biosynthesis; 1,4-dihydroxy-2-naphthoate from chorismate: step 4/7. The protein operates within cofactor biosynthesis; phylloquinone biosynthesis. In terms of biological role, converts 2-succinyl-6-hydroxy-2,4-cyclohexadiene-1-carboxylate (SHCHC) to 2-succinylbenzoate (OSB). Does not show N-succinylamino acid racemase (NSAR) activity with N-succinyl-L-phenylglycine as substrate. This Thermosynechococcus vestitus (strain NIES-2133 / IAM M-273 / BP-1) protein is o-succinylbenzoate synthase.